The sequence spans 113 residues: U11-theraphotoxin-Hhn1a (113 aa).

The first 21 residues, 1–21, serve as a signal peptide directing secretion; that stretch reads MNTVRVTFLLVFVLAVSLGQA. Positions 22-74 are excised as a propeptide; sequence DKDENRMEMQEKTEQGESYLDFAENLLLQKLEELEAKLLEEDSEESRNSRQKR. Intrachain disulfides connect Cys75–Cys90, Cys82–Cys95, and Cys89–Cys110.

It belongs to the neurotoxin 14 (magi-1) family. 01 (HNTX-16) subfamily. As to expression, expressed by the venom gland.

It is found in the secreted. Its function is as follows. Probable ion channel inhibitor. The sequence is that of U11-theraphotoxin-Hhn1a from Cyriopagopus hainanus (Chinese bird spider).